We begin with the raw amino-acid sequence, 539 residues long: Acid-sensing ion channel 4 (539 aa).

At 1-68 the chain is on the cytoplasmic side; the sequence is MPIEIVCKIK…GPGPHGLRRT (68 aa). The chain crosses the membrane as a helical span at residues 69-89; the sequence is LWALALLTSLAAFLYQAAGLA. At 90–438 the chain is on the extracellular side; the sequence is RGYLTRPHLV…EQRAAYGLSA (349 aa). Cystine bridges form between C118/C202 and C180/C187. N-linked (GlcNAc...) asparagine glycosylation is found at N191 and N243. 5 disulfide bridges follow: C296/C375, C318/C371, C322/C369, C331/C353, and C333/C345. N-linked (GlcNAc...) asparagine glycosylation occurs at N376. Residues 439 to 459 form a helical membrane-spanning segment; it reads LLGDLGGQMGLFIGASILTLL. The GAS motif; ion selectivity filter motif lies at 452 to 454; sequence GAS. At 460–539 the chain is on the cytoplasmic side; the sequence is EILDYIYEVS…PGGLFEDFAC (80 aa). The disordered stretch occupies residues 501 to 531; that stretch reads EQSPCPSRGRVEGGGVSSLLPNHHHPHGPPG.

It belongs to the amiloride-sensitive sodium channel (TC 1.A.6) family. ASIC4 subfamily. In terms of assembly, homotrimer. Heterotrimer; with other ASIC proteins producing functional channels. In terms of tissue distribution, expressed in pituitary gland. Weakly expressed in brain, vestibular system and organ of Corti.

Its subcellular location is the cell membrane. Does not exhibit measurable stand-alone pH-gated sodium channel activity but may form pH-gated heterotrimeric sodium channels. Its activity could also depend on alternative gating mechanisms. This chain is Acid-sensing ion channel 4, found in Homo sapiens (Human).